Reading from the N-terminus, the 514-residue chain is ATP synthase subunit alpha (514 aa).

170 to 177 (GDRQTGKT) provides a ligand contact to ATP.

This sequence belongs to the ATPase alpha/beta chains family. As to quaternary structure, F-type ATPases have 2 components, CF(1) - the catalytic core - and CF(0) - the membrane proton channel. CF(1) has five subunits: alpha(3), beta(3), gamma(1), delta(1), epsilon(1). CF(0) has three main subunits: a(1), b(2) and c(9-12). The alpha and beta chains form an alternating ring which encloses part of the gamma chain. CF(1) is attached to CF(0) by a central stalk formed by the gamma and epsilon chains, while a peripheral stalk is formed by the delta and b chains.

The protein resides in the cell inner membrane. It carries out the reaction ATP + H2O + 4 H(+)(in) = ADP + phosphate + 5 H(+)(out). In terms of biological role, produces ATP from ADP in the presence of a proton gradient across the membrane. The alpha chain is a regulatory subunit. This is ATP synthase subunit alpha from Acinetobacter baumannii (strain AB307-0294).